We begin with the raw amino-acid sequence, 493 residues long: Proline--tRNA ligase (493 aa).

This sequence belongs to the class-II aminoacyl-tRNA synthetase family. ProS type 3 subfamily. In terms of assembly, homodimer.

It localises to the cytoplasm. It carries out the reaction tRNA(Pro) + L-proline + ATP = L-prolyl-tRNA(Pro) + AMP + diphosphate. Functionally, catalyzes the attachment of proline to tRNA(Pro) in a two-step reaction: proline is first activated by ATP to form Pro-AMP and then transferred to the acceptor end of tRNA(Pro). The polypeptide is Proline--tRNA ligase (Porphyromonas gingivalis (strain ATCC 33277 / DSM 20709 / CIP 103683 / JCM 12257 / NCTC 11834 / 2561)).